Reading from the N-terminus, the 787-residue chain is Mitochondrial intermediate peptidase (787 aa).

The N-terminal 36 residues, 1 to 36, are a transit peptide targeting the mitochondrion; sequence MQNKVLRGILFKNVPLGYSYNRSIRHPTFGNSIIRW. Histidine 573 is a Zn(2+) binding site. Glutamate 574 is an active-site residue. Residues histidine 577 and histidine 580 each contribute to the Zn(2+) site.

It belongs to the peptidase M3 family. Zn(2+) is required as a cofactor.

The protein resides in the mitochondrion matrix. It catalyses the reaction Release of an N-terminal octapeptide as second stage of processing of some proteins imported into the mitochondrion.. Functionally, cleaves proteins, imported into the mitochondrion, to their mature size. While most mitochondrial precursor proteins are processed to the mature form in one step by mitochondrial processing peptidase (MPP), the sequential cleavage by MIP of an octapeptide after initial processing by MPP is a required step for a subgroup of nuclear-encoded precursor proteins destined for the matrix or the inner membrane. The protein is Mitochondrial intermediate peptidase (OCT1) of Vanderwaltozyma polyspora (strain ATCC 22028 / DSM 70294 / BCRC 21397 / CBS 2163 / NBRC 10782 / NRRL Y-8283 / UCD 57-17) (Kluyveromyces polysporus).